Consider the following 324-residue polypeptide: tRNA dimethylallyltransferase (324 aa).

17 to 24 serves as a coordination point for ATP; that stretch reads GPTASGKT. Position 19–24 (19–24) interacts with substrate; the sequence is TASGKT. Interaction with substrate tRNA stretches follow at residues 42–45, 166–170, and 251–256; these read DSAL, QRIQR, and RCVGYR.

Belongs to the IPP transferase family. As to quaternary structure, monomer. Mg(2+) is required as a cofactor.

The catalysed reaction is adenosine(37) in tRNA + dimethylallyl diphosphate = N(6)-dimethylallyladenosine(37) in tRNA + diphosphate. Its function is as follows. Catalyzes the transfer of a dimethylallyl group onto the adenine at position 37 in tRNAs that read codons beginning with uridine, leading to the formation of N6-(dimethylallyl)adenosine (i(6)A). This is tRNA dimethylallyltransferase from Burkholderia thailandensis (strain ATCC 700388 / DSM 13276 / CCUG 48851 / CIP 106301 / E264).